Here is a 538-residue protein sequence, read N- to C-terminus: Phosphoenolpyruvate carboxykinase (ATP) (538 aa).

Arg64 lines the substrate pocket. Ca(2+)-binding residues include Asn149 and Phe151. Residues Tyr206 and Lys212 each contribute to the substrate site. Residues Lys212, His231, and Gly247–Thr255 each bind ATP. Mn(2+)-binding residues include Lys212 and His231. Asp268 contacts Mn(2+). ATP-binding positions include Glu296, Arg332, Arg447–Ile448, and Thr453. Arg332 contacts substrate.

It belongs to the phosphoenolpyruvate carboxykinase (ATP) family. Monomer. Requires Mn(2+) as cofactor.

The protein resides in the cytoplasm. The catalysed reaction is oxaloacetate + ATP = phosphoenolpyruvate + ADP + CO2. It participates in carbohydrate biosynthesis; gluconeogenesis. Allosterically activated by calcium. Functionally, involved in the gluconeogenesis. Catalyzes the conversion of oxaloacetate (OAA) to phosphoenolpyruvate (PEP) through direct phosphoryl transfer between the nucleoside triphosphate and OAA. This Salmonella typhimurium (strain LT2 / SGSC1412 / ATCC 700720) protein is Phosphoenolpyruvate carboxykinase (ATP).